The following is an 82-amino-acid chain: Sec-independent protein translocase protein TatA (82 aa).

A helical membrane pass occupies residues 1 to 21 (MGGISIWQLLIIAVIIVLLFG). The disordered stretch occupies residues 48-82 (SAKDAKKDADFVPQNLEKKEAETVEKQKQNDKEQA).

The protein belongs to the TatA/E family. In terms of assembly, the Tat system comprises two distinct complexes: a TatABC complex, containing multiple copies of TatA, TatB and TatC subunits, and a separate TatA complex, containing only TatA subunits. Substrates initially bind to the TatABC complex, which probably triggers association of the separate TatA complex to form the active translocon.

The protein localises to the cell inner membrane. Part of the twin-arginine translocation (Tat) system that transports large folded proteins containing a characteristic twin-arginine motif in their signal peptide across membranes. TatA could form the protein-conducting channel of the Tat system. The chain is Sec-independent protein translocase protein TatA from Aliivibrio salmonicida (strain LFI1238) (Vibrio salmonicida (strain LFI1238)).